The primary structure comprises 736 residues: DNA ligase (736 aa).

Residues 41–45 (DQEYD), 91–92 (SL), and E125 each bind NAD(+). The N6-AMP-lysine intermediate role is filled by K127. R148 is a binding site for NAD(+). The segment at 170–205 (ELTPLPLAGGAGGGPLDDSGSAPTPDPSRRREGKWN) is disordered. NAD(+) is bound by residues E215, K347, and K371. Positions 463, 466, 481, and 487 each coordinate Zn(2+). The BRCT domain maps to 656 to 736 (TLDSPVAGKT…GWAEIVAAAG (81 aa)).

This sequence belongs to the NAD-dependent DNA ligase family. LigA subfamily. It depends on Mg(2+) as a cofactor. Mn(2+) is required as a cofactor.

It catalyses the reaction NAD(+) + (deoxyribonucleotide)n-3'-hydroxyl + 5'-phospho-(deoxyribonucleotide)m = (deoxyribonucleotide)n+m + AMP + beta-nicotinamide D-nucleotide.. In terms of biological role, DNA ligase that catalyzes the formation of phosphodiester linkages between 5'-phosphoryl and 3'-hydroxyl groups in double-stranded DNA using NAD as a coenzyme and as the energy source for the reaction. It is essential for DNA replication and repair of damaged DNA. This chain is DNA ligase, found in Erythrobacter litoralis (strain HTCC2594).